The primary structure comprises 93 residues: YcgL domain-containing protein Swoo_2115 (93 aa).

The YcgL domain occupies 1 to 85 (MICAVYKSRR…PVVNLLEEHK (85 aa)).

In Shewanella woodyi (strain ATCC 51908 / MS32), this protein is YcgL domain-containing protein Swoo_2115.